A 527-amino-acid chain; its full sequence is Palmitoleoyl-protein carboxylesterase NOTUM (527 aa).

The first 19 residues, 1 to 19 (MKSYLILNTLLLSLLKING), serve as a signal peptide directing secretion. N-linked (GlcNAc...) asparagine glycans are attached at residues N64, N86, and N104. S203 functions as the Charge relay system in the catalytic mechanism. N249 carries N-linked (GlcNAc...) asparagine glycosylation. Residues D311 and H359 each act as charge relay system in the active site. The N-linked (GlcNAc...) asparagine glycan is linked to N451.

This sequence belongs to the pectinacetylesterase family. Notum subfamily. Expressed in the anterior pole.

The protein resides in the secreted. The enzyme catalyses [Wnt protein]-O-(9Z)-hexadecenoyl-L-serine + H2O = [Wnt protein]-L-serine + (9Z)-hexadecenoate + H(+). Carboxylesterase that acts as a key negative regulator of the Wnt signaling pathway. Acts by specifically mediating depalmitoleoylation of WNT proteins. Serine palmitoleoylation of WNT proteins is required for efficient binding to frizzled receptors. Promotes head regeneration following amputation by inhibiting the Wnt signaling pathway. This is Palmitoleoyl-protein carboxylesterase NOTUM from Schmidtea mediterranea (Freshwater planarian flatworm).